The chain runs to 183 residues: MKQRLLFLGPPGAGKGTQAALLCDRHGLRHLSTGDLLRAEVSAGSALGQEAESVMNRGELVSDSLVLAIVKAQLGALNGQGWLLDGFPRNVAQAEALDPLLQELNQPIEAVVLLELDDAVLIERLLSRGRDDDNEAVIRNRLVVYADKTEPLIEHYRQRGLLQSVEAHGSIEAITERIEGVLA.

ATP is bound at residue 12–17; sequence GAGKGT. Residues 32-61 are NMP; sequence STGDLLRAEVSAGSALGQEAESVMNRGELV. Residues threonine 33, arginine 38, 59–61, 86–89, and glutamine 93 contribute to the AMP site; these read ELV and GFPR. Residues 127–133 form an LID region; sequence SRGRDDD. Arginine 128 provides a ligand contact to ATP. AMP contacts are provided by arginine 130 and arginine 141. An ATP-binding site is contributed by glycine 169.

This sequence belongs to the adenylate kinase family. In terms of assembly, monomer.

Its subcellular location is the cytoplasm. It carries out the reaction AMP + ATP = 2 ADP. It functions in the pathway purine metabolism; AMP biosynthesis via salvage pathway; AMP from ADP: step 1/1. Its function is as follows. Catalyzes the reversible transfer of the terminal phosphate group between ATP and AMP. Plays an important role in cellular energy homeostasis and in adenine nucleotide metabolism. The protein is Adenylate kinase of Synechococcus sp. (strain CC9311).